The sequence spans 314 residues: tRNA pseudouridine synthase B (314 aa).

H43 is a binding site for substrate. D48 serves as the catalytic Nucleophile. The substrate site is built by Y76, Y179, and L200.

Belongs to the pseudouridine synthase TruB family. Type 1 subfamily.

The catalysed reaction is uridine(55) in tRNA = pseudouridine(55) in tRNA. Its function is as follows. Responsible for synthesis of pseudouridine from uracil-55 in the psi GC loop of transfer RNAs. This is tRNA pseudouridine synthase B from Shigella boydii serotype 4 (strain Sb227).